The primary structure comprises 547 residues: Glucose-6-phosphate isomerase (547 aa).

Catalysis depends on glutamate 353, which acts as the Proton donor. Catalysis depends on residues histidine 384 and lysine 512.

This sequence belongs to the GPI family.

The protein resides in the cytoplasm. It catalyses the reaction alpha-D-glucose 6-phosphate = beta-D-fructose 6-phosphate. The protein operates within carbohydrate biosynthesis; gluconeogenesis. It functions in the pathway carbohydrate degradation; glycolysis; D-glyceraldehyde 3-phosphate and glycerone phosphate from D-glucose: step 2/4. Catalyzes the reversible isomerization of glucose-6-phosphate to fructose-6-phosphate. In Campylobacter jejuni subsp. doylei (strain ATCC BAA-1458 / RM4099 / 269.97), this protein is Glucose-6-phosphate isomerase.